We begin with the raw amino-acid sequence, 734 residues long: Photosystem I P700 chlorophyll a apoprotein A2 (734 aa).

Helical transmembrane passes span Ile46–Ala69, Leu135–Gln158, Leu175–Ile199, Met273–Tyr291, Leu330–Tyr353, Ser369–Ile395, Ala417–His439, and Phe517–Val535. Positions 559 and 568 each coordinate [4Fe-4S] cluster. The next 2 helical transmembrane spans lie at Ala575–Trp596 and Leu643–Ile665. Residues His654, Met662, and Tyr670 each coordinate chlorophyll a. Position 671 (Trp671) interacts with phylloquinone. Residues Leu707–Ala727 traverse the membrane as a helical segment.

It belongs to the PsaA/PsaB family. The PsaA/B heterodimer binds the P700 chlorophyll special pair and subsequent electron acceptors. PSI consists of a core antenna complex that captures photons, and an electron transfer chain that converts photonic excitation into a charge separation. The eukaryotic PSI reaction center is composed of at least 11 subunits. Requires P700 is a chlorophyll a/chlorophyll a' dimer, A0 is one or more chlorophyll a, A1 is one or both phylloquinones and FX is a shared 4Fe-4S iron-sulfur center. as cofactor.

The protein localises to the plastid. The protein resides in the chloroplast thylakoid membrane. The catalysed reaction is reduced [plastocyanin] + hnu + oxidized [2Fe-2S]-[ferredoxin] = oxidized [plastocyanin] + reduced [2Fe-2S]-[ferredoxin]. Functionally, psaA and PsaB bind P700, the primary electron donor of photosystem I (PSI), as well as the electron acceptors A0, A1 and FX. PSI is a plastocyanin/cytochrome c6-ferredoxin oxidoreductase, converting photonic excitation into a charge separation, which transfers an electron from the donor P700 chlorophyll pair to the spectroscopically characterized acceptors A0, A1, FX, FA and FB in turn. Oxidized P700 is reduced on the lumenal side of the thylakoid membrane by plastocyanin or cytochrome c6. This Nephroselmis olivacea (Green alga) protein is Photosystem I P700 chlorophyll a apoprotein A2.